We begin with the raw amino-acid sequence, 301 residues long: Lipoyl synthase (301 aa).

[4Fe-4S] cluster is bound by residues C50, C55, C61, C76, C80, C83, and S289. Positions 62–278 (WNHRTATFLL…RRYALERGFR (217 aa)) constitute a Radical SAM core domain.

This sequence belongs to the radical SAM superfamily. Lipoyl synthase family. [4Fe-4S] cluster serves as cofactor.

It is found in the cytoplasm. It catalyses the reaction [[Fe-S] cluster scaffold protein carrying a second [4Fe-4S](2+) cluster] + N(6)-octanoyl-L-lysyl-[protein] + 2 oxidized [2Fe-2S]-[ferredoxin] + 2 S-adenosyl-L-methionine + 4 H(+) = [[Fe-S] cluster scaffold protein] + N(6)-[(R)-dihydrolipoyl]-L-lysyl-[protein] + 4 Fe(3+) + 2 hydrogen sulfide + 2 5'-deoxyadenosine + 2 L-methionine + 2 reduced [2Fe-2S]-[ferredoxin]. The protein operates within protein modification; protein lipoylation via endogenous pathway; protein N(6)-(lipoyl)lysine from octanoyl-[acyl-carrier-protein]: step 2/2. Catalyzes the radical-mediated insertion of two sulfur atoms into the C-6 and C-8 positions of the octanoyl moiety bound to the lipoyl domains of lipoate-dependent enzymes, thereby converting the octanoylated domains into lipoylated derivatives. The polypeptide is Lipoyl synthase (Roseiflexus sp. (strain RS-1)).